The sequence spans 121 residues: Parathyroid hormone 4 (121 aa).

The first 24 residues, 1–24 (MLKMQRSQQRVALMMLMVVAAVHC), serve as a signal peptide directing secretion. The propeptide occupies 25-29 (QESES). Residues 77 to 97 (RSRGAQLYSQPGREESSGGQK) are disordered.

The protein belongs to the parathyroid hormone family. Specifically expressed in a bilateral cluster of neurons in the dorsal region of the periventricular hypothalamus. Their axons project through the midbrain and hindbrain and down the spinal cord.

Its subcellular location is the secreted. Its function is as follows. Neuroendocrine peptide which is produced by a subset of neurons in the hypothalamus. Activates the G-protein coupled receptors pth1ra, pth1rb and pth2r with similar affinity. Receptor binding stimulates intracellular cAMP production. Plays a role in bone mineralization by regulating expression of factors involved in phosphate homeostasis. Important for embryonic bone development. This Danio rerio (Zebrafish) protein is Parathyroid hormone 4.